The primary structure comprises 570 residues: Alpha-glucosidase (570 aa).

Asp-206 serves as the catalytic Nucleophile. Glu-263 (proton donor) is an active-site residue.

This sequence belongs to the glycosyl hydrolase 13 family.

It carries out the reaction Hydrolysis of terminal, non-reducing (1-&gt;4)-linked alpha-D-glucose residues with release of alpha-D-glucose.. This Candida albicans (Yeast) protein is Alpha-glucosidase (MAL2).